A 286-amino-acid polypeptide reads, in one-letter code: Beta-lactamase Ohio-1 (286 aa).

Positions 1–21 are cleaved as a signal peptide; it reads MRYFRLCIISLLATLPLRVHA. S66 serves as the catalytic Acyl-ester intermediate. A disulfide bridge links C73 with C119. E164 acts as the Proton acceptor in catalysis. 230-232 contacts substrate; it reads KTG.

It belongs to the class-A beta-lactamase family.

It catalyses the reaction a beta-lactam + H2O = a substituted beta-amino acid. The chain is Beta-lactamase Ohio-1 from Enterobacter cloacae.